The following is a 1038-amino-acid chain: Protein argonaute 1D (1038 aa).

Disordered stretches follow at residues 1 to 58 and 110 to 134; these read MGSR…GAAP and APHE…PRSL. 2 stretches are compositionally biased toward gly residues: residues 18 to 29 and 43 to 52; these read RGGGRGGGGRGR and GHGGRGGAGY. Low complexity predominate over residues 115–134; it reads PANVSSPEAASPEASSPRSL. The 114-residue stretch at 380–493 folds into the PAZ domain; sequence PVIDFVIQLL…LPMEVCKIVE (114 aa). The region spanning 669-990 is the Piwi domain; it reads LLIGLLPDNN…AAFRARFYME (322 aa). Positions 992-1021 are disordered; the sequence is DSSDSGSMASGRGGGSSTSRSTRAAGGGAV.

Belongs to the argonaute family. Ago subfamily.

In terms of biological role, probably involved in the RNA silencing pathway. May bind to short RNAs such as microRNAs (miRNAs) or short interfering RNAs (siRNAs), and represses the translation of mRNAs which are complementary to them. This is Protein argonaute 1D (AGO1D) from Oryza sativa subsp. japonica (Rice).